The chain runs to 895 residues: MERASERRTASALFAGFRALGLFSNDIPHVVRFSALKRRFYVTTCVGKSFHTYDVQKLSLVAVSNSVPQDICCMAADGRLVFAAYGNVFSAFARNKEIVHTFKGHKAEIHFLQPFGDHIISVDTDGILIIWHIYSEEEYLQLTFDKSVFKISAILHPSTYLNKILLGSEQGSLQLWNVKSNKLLYTFPGWKVGVTALQQAPAVDVVAIGLMSGQVIIHNIKFNETLMKFRQDWGPITSISFRTDGHPVMAAGSPCGHIGLWDLEDKKLINQMRNAHSTAIAGLTFLHREPLLVTNGADNALRIWIFDGPTGEGRLLRFRMGHSAPLTNIRYYGQNGQQILSASQDGTLQSFSTVHEKFNKSLGHGLINKKRVKRKGLQNTMSVRLPPITKFAAEEARESDWDGIIACHQGKLSCSTWNYQKSTIGAYFLKPKELKKDDITATAVDITSCGNFAVIGLSSGTVDVYNMQSGIHRGSFGKDQAHKGSVRGVAVDGLNQLTVTTGSEGLLKFWNFKNKILIHSVSLSSSPNIMLLHRDSGILGLALDDFSISVLDIETRKIVREFSGHQGQINDMAFSPDGRWLISAAMDCSIRTWDLPSGCLIDCFLLDSAPLNVSMSPTGDFLATSHVDHLGIYLWSNISLYSVVSLRPLPADYVPSIVMLPGTCQTQDVEVSEETVEPSDELIEYDSPEQLNEQLVTLSLLPESRWKNLLNLDVIKKKNKPKEPPKVPKSAPFFIPTIPGLVPRYAAPEQNNDPQQSKVVNLGVLAQKSDFCLKLEEGLVNNKYDTALNLLKESGPSGIETELRSLSPDCGGSIEVMQSFLKMIGMMLDRKRDFELAQAYLALFLKLHLKMLPSEPVLLEEITNLSSQVEENWTHLQSLFNQSMCILNYLKSALL.

WD repeat units lie at residues 30–63 (VVRF…LVAV), 72–101 (CCMA…IVHT), 110–143 (HFLQ…LQLT), 152–186 (SAIL…LLYT), 193–230 (GVTA…MKFR), 237–272 (TSIS…INQM), 277–320 (STAI…RFRM), and 327–361 (TNIR…FNKS). Serine 382 and serine 399 each carry phosphoserine. 6 WD repeats span residues 389-428 (TKFA…GAYF), 441-475 (ATAV…HRGS), 486-522 (VRGV…HSVS), 527-562 (PNIM…VREF), 564-605 (GHQG…DCFL), and 607-645 (DSAP…SVVS).

In terms of assembly, part of the small subunit (SSU) processome, composed of more than 70 proteins and the RNA chaperone small nucleolar RNA (snoRNA) U3. In terms of tissue distribution, expressed in heart, placenta, liver, skeletal muscle, kidney and pancreas. In ocular tissues, strong expression in iris, sclera, ciliary muscle, ciliary body, retina and optic nerve.

It is found in the nucleus. Its subcellular location is the nucleolus. In terms of biological role, part of the small subunit (SSU) processome, first precursor of the small eukaryotic ribosomal subunit. During the assembly of the SSU processome in the nucleolus, many ribosome biogenesis factors, an RNA chaperone and ribosomal proteins associate with the nascent pre-rRNA and work in concert to generate RNA folding, modifications, rearrangements and cleavage as well as targeted degradation of pre-ribosomal RNA by the RNA exosome. Involved in the nucleolar processing of SSU 18S rRNA. Involved in T-cell activation and highly coregulated with IL2. This chain is WD repeat-containing protein 36, found in Homo sapiens (Human).